Consider the following 884-residue polypeptide: Bifunctional heparan sulfate N-deacetylase/N-sulfotransferase 2 (884 aa).

Over 1-18 (MLKLWKVVRPARQLELHR) the chain is Cytoplasmic. Residues 19–39 (LILLLIAFSLGSMGFLAYYVS) form a helical; Signal-anchor for type II membrane protein membrane-spanning segment. Over 40 to 884 (TSPKAKEPLP…REELQHSSSG (845 aa)) the chain is Lumenal. The heparan sulfate N-deacetylase 2 stretch occupies residues 41–598 (SPKAKEPLPL…KRHKDIWSKE (558 aa)). Residues 49-82 (PLPLGDCSSSGAAGGPGPVRPPVPPRPPRPPETA) form a disordered region. Over residues 66–79 (PVRPPVPPRPPRPP) the composition is skewed to pro residues. Asn-351 and Asn-401 each carry an N-linked (GlcNAc...) asparagine glycan. The tract at residues 599–884 (KTCDRLPKFL…REELQHSSSG (286 aa)) is heparan sulfate N-sulfotransferase 2. Lys-614 functions as the For sulfotransferase activity in the catalytic mechanism. Residue 614-618 (KTGTT) coordinates 3'-phosphoadenylyl sulfate. An N-linked (GlcNAc...) asparagine glycan is attached at Asn-667. Ser-712 contributes to the 3'-phosphoadenylyl sulfate binding site. N-linked (GlcNAc...) asparagine glycosylation is found at Asn-727 and Asn-803. A disulfide bond links Cys-818 and Cys-828. 833-837 (KGRKY) is a binding site for 3'-phosphoadenylyl sulfate.

It belongs to the sulfotransferase 1 family. NDST subfamily. In terms of assembly, monomer.

It localises to the golgi apparatus membrane. It catalyses the reaction alpha-D-glucosaminyl-[heparan sulfate](n) + 3'-phosphoadenylyl sulfate = N-sulfo-alpha-D-glucosaminyl-[heparan sulfate](n) + adenosine 3',5'-bisphosphate + 2 H(+). It participates in glycan metabolism; heparan sulfate biosynthesis. It functions in the pathway glycan metabolism; heparin biosynthesis. Essential bifunctional enzyme that catalyzes both the N-deacetylation and the N-sulfation of glucosamine (GlcNAc) of the glycosaminoglycan in heparan sulfate. Modifies the GlcNAc-GlcA disaccharide repeating sugar backbone to make N-sulfated heparosan, a prerequisite substrate for later modifications in heparin biosynthesis. Plays a role in determining the extent and pattern of sulfation of heparan sulfate. Required for the exosomal release of SDCBP, CD63 and syndecan. The chain is Bifunctional heparan sulfate N-deacetylase/N-sulfotransferase 2 (NDST2) from Bos taurus (Bovine).